The primary structure comprises 522 residues: Gypsy retrotransposon integrase-like protein 1 (522 aa).

Residues 135 to 292 (KVENPWSLVT…TPYFQMFSRN (158 aa)) form the Integrase catalytic domain.

In Macaca fascicularis (Crab-eating macaque), this protein is Gypsy retrotransposon integrase-like protein 1 (GIN1).